The sequence spans 259 residues: tRNA (guanine-N(7)-)-methyltransferase (259 aa).

The tract at residues 1–74 is disordered; that stretch reads MGHHGQMHAQ…PAEDPDRPGP (74 aa). Residues E91, E116, N143, and D166 each coordinate S-adenosyl-L-methionine. D166 is an active-site residue. Substrate is bound by residues K170, D202, and 238-241; that span reads TKYE.

The protein belongs to the class I-like SAM-binding methyltransferase superfamily. TrmB family.

It catalyses the reaction guanosine(46) in tRNA + S-adenosyl-L-methionine = N(7)-methylguanosine(46) in tRNA + S-adenosyl-L-homocysteine. It functions in the pathway tRNA modification; N(7)-methylguanine-tRNA biosynthesis. Catalyzes the formation of N(7)-methylguanine at position 46 (m7G46) in tRNA. This chain is tRNA (guanine-N(7)-)-methyltransferase, found in Mycobacterium avium (strain 104).